Here is a 122-residue protein sequence, read N- to C-terminus: Small ribosomal subunit protein uS13 (122 aa).

The disordered stretch occupies residues 99 to 122 (RGQRTHTNARTRKGPAKAIAGKKK).

The protein belongs to the universal ribosomal protein uS13 family. As to quaternary structure, part of the 30S ribosomal subunit. Forms a loose heterodimer with protein S19. Forms two bridges to the 50S subunit in the 70S ribosome.

In terms of biological role, located at the top of the head of the 30S subunit, it contacts several helices of the 16S rRNA. In the 70S ribosome it contacts the 23S rRNA (bridge B1a) and protein L5 of the 50S subunit (bridge B1b), connecting the 2 subunits; these bridges are implicated in subunit movement. Contacts the tRNAs in the A and P-sites. The protein is Small ribosomal subunit protein uS13 of Bradyrhizobium diazoefficiens (strain JCM 10833 / BCRC 13528 / IAM 13628 / NBRC 14792 / USDA 110).